A 317-amino-acid chain; its full sequence is tRNA dimethylallyltransferase (317 aa).

14–21 (GPTAVGKT) is an ATP binding site. 16–21 (TAVGKT) is a binding site for substrate. The tract at residues 39-42 (DSMQ) is interaction with substrate tRNA.

It belongs to the IPP transferase family. As to quaternary structure, monomer. Mg(2+) serves as cofactor.

The catalysed reaction is adenosine(37) in tRNA + dimethylallyl diphosphate = N(6)-dimethylallyladenosine(37) in tRNA + diphosphate. Its function is as follows. Catalyzes the transfer of a dimethylallyl group onto the adenine at position 37 in tRNAs that read codons beginning with uridine, leading to the formation of N6-(dimethylallyl)adenosine (i(6)A). This is tRNA dimethylallyltransferase from Bacillus cereus (strain AH187).